The chain runs to 262 residues: MSQEEQPKRPQEPVTYGDVFEVSGELADKPIAPEDANMMQAAETRVFGHTQKGGAAAVMQSAATANKRGGFVHPGDTTDLAAERGVTVAQTDVPGARVTTEFVGGQVVGQYVEPRPVATAAAMEAEVVGLSLQSAITIGEALEATVQTAGNKPVDQSDAAAIQAAEVRACGTNVIAPGGIAASAQSAANHNATIDRDEDKIKLIDVLAGATGKLAADKAVTRQDAEGVVSAELRNNPNLSTHPGGVAASITAAARLNERADI.

The Nuclear localization signal (NLS) signature appears at glutamine 6 to proline 10. 3 SMP domains span residues valine 14–arginine 68, isoleucine 136–alanine 192, and isoleucine 201–alanine 260.

The protein belongs to the LEA type SMP family. Embryo specific, only in dry mature seeds.

It is found in the nucleus. The protein localises to the nucleolus. It localises to the cytoplasm. Functionally, LEA proteins are late embryonic proteins abundant in higher plant seed embryos. The function of those proteins is not known. Promotes germination rate. Enhances cation toxicity (e.g. lithium ion) and osmotic stress (e.g. NaCl and sorbitol) tolerance during germination and in seedlings. This Arabidopsis thaliana (Mouse-ear cress) protein is Late embryogenesis abundant protein 31.